The primary structure comprises 204 residues: ATP phosphoribosyltransferase (204 aa).

Belongs to the ATP phosphoribosyltransferase family. Short subfamily. As to quaternary structure, heteromultimer composed of HisG and HisZ subunits.

The protein localises to the cytoplasm. It carries out the reaction 1-(5-phospho-beta-D-ribosyl)-ATP + diphosphate = 5-phospho-alpha-D-ribose 1-diphosphate + ATP. It functions in the pathway amino-acid biosynthesis; L-histidine biosynthesis; L-histidine from 5-phospho-alpha-D-ribose 1-diphosphate: step 1/9. Catalyzes the condensation of ATP and 5-phosphoribose 1-diphosphate to form N'-(5'-phosphoribosyl)-ATP (PR-ATP). Has a crucial role in the pathway because the rate of histidine biosynthesis seems to be controlled primarily by regulation of HisG enzymatic activity. The polypeptide is ATP phosphoribosyltransferase (Staphylococcus aureus (strain MRSA252)).